We begin with the raw amino-acid sequence, 130 residues long: Small ribosomal subunit protein uS11c (130 aa).

Belongs to the universal ribosomal protein uS11 family. In terms of assembly, part of the 30S ribosomal subunit.

It is found in the plastid. The protein localises to the chloroplast. This chain is Small ribosomal subunit protein uS11c, found in Guillardia theta (Cryptophyte).